The sequence spans 471 residues: Putative multidrug resistance protein MdtD (471 aa).

Residues 1–11 (MTDLPDSTRWQ) lie on the Periplasmic side of the membrane. A helical transmembrane segment spans residues 12–32 (LWIVAFGFFMQSLDTTIVNTA). Residues 33-48 (LPSMAQSLGESPLHMH) are Cytoplasmic-facing. The helical transmembrane segment at 49 to 69 (MVIVSYVLTVAVMLPASGWLA) threads the bilayer. The Periplasmic portion of the chain corresponds to 70–76 (DKVGVRN). Residues 77–97 (IFFTAIVLFTLGSLFCALSGT) form a helical membrane-spanning segment. Residues 98–101 (LNEL) are Cytoplasmic-facing. The helical transmembrane segment at 102-124 (LLARALQGVGGAMMVPVGRLTVM) threads the bilayer. Residues 125–137 (KIVPREQYMAAMT) lie on the Periplasmic side of the membrane. A helical transmembrane segment spans residues 138 to 158 (FVTLPGQVGPLLGPALGGLLV). Residues 159–164 (EYASWH) are Cytoplasmic-facing. A helical membrane pass occupies residues 165–185 (WIFLINIPVGIIGAIATLLLM). The Periplasmic portion of the chain corresponds to 186–196 (PNYTMQTWRFD). Residues 197–217 (LSGFLLLAVGMAVLTLALDGS) form a helical membrane-spanning segment. The Cytoplasmic segment spans residues 218–224 (KGTGLSP). Residues 225 to 245 (LAIAGLVAVGVVALVLYLLHA) traverse the membrane as a helical segment. The Periplasmic portion of the chain corresponds to 246-262 (RNNNRALFSLKLFRTRT). Residues 263–283 (FSLGLAGSFAGRIGSGMLPFM) form a helical membrane-spanning segment. Topologically, residues 284–285 (TP) are cytoplasmic. Residues 286–306 (VFLQIGLGFSPFHAGLMMIPM) traverse the membrane as a helical segment. The Periplasmic portion of the chain corresponds to 307–341 (VLGSMGMKRIVVQVVNRFGYRRVLVATTLGLSLVT). Residues 342–362 (LLFMTTALLGWYYVLPFVLFL) form a helical membrane-spanning segment. The Cytoplasmic portion of the chain corresponds to 363 to 395 (QGMVNSTRFSSMNTLTLKDLPDNLASSGNSLLS). The helical transmembrane segment at 396–416 (MIMQLSMSIGVTIAGLLLGLF) threads the bilayer. Residues 417-430 (GSQHVSVDSGTTQT) lie on the Periplasmic side of the membrane. A helical transmembrane segment spans residues 431–451 (VFMYTWLSMALIIALPAFIFA). Residues 452 to 471 (RVPNDTHQNVAISRRKRSAQ) are Cytoplasmic-facing.

This sequence belongs to the major facilitator superfamily. TCR/Tet family.

It localises to the cell inner membrane. In Shigella boydii serotype 4 (strain Sb227), this protein is Putative multidrug resistance protein MdtD.